The primary structure comprises 81 residues: Large ribosomal subunit protein bL31B (81 aa).

It belongs to the bacterial ribosomal protein bL31 family. Type B subfamily. In terms of assembly, part of the 50S ribosomal subunit.

This Lactiplantibacillus plantarum (strain ATCC BAA-793 / NCIMB 8826 / WCFS1) (Lactobacillus plantarum) protein is Large ribosomal subunit protein bL31B (rpmE2).